The chain runs to 212 residues: External core antigen (212 aa).

The signal sequence occupies residues methionine 1–alanine 19. Positions glycine 25–leucine 27 are HBEAG. The interval asparagine 165–cysteine 212 is disordered. The segment covering glutamine 180–serine 205 has biased composition (basic residues). A 1; half-length repeat occupies alanine 184–proline 190. Positions alanine 184 to glutamine 206 are 3 X 8 AA repeats of S-P-R-R-R-R-S-Q. Residues alanine 184 to cysteine 212 constitute a propeptide that is removed on maturation. A run of 2 repeats spans residues serine 191 to glutamine 198 and serine 199 to glutamine 206.

The protein belongs to the orthohepadnavirus precore antigen family. As to quaternary structure, homodimerizes. Phosphorylated. In terms of processing, cleaved by host furin.

Its subcellular location is the secreted. The protein localises to the host nucleus. Its function is as follows. May regulate immune response to the intracellular capsid in acting as a T-cell tolerogen, by having an immunoregulatory effect which prevents destruction of infected cells by cytotoxic T-cells. This immune regulation may predispose to chronicity during perinatal infections and prevent severe liver injury during adult infections. The polypeptide is External core antigen (Hepatitis B virus genotype H subtype adw4 (isolate Nicaragua/2928Nic/1997) (HBV-H)).